A 469-amino-acid polypeptide reads, in one-letter code: Phosphoenolpyruvate carboxylase (469 aa).

This sequence belongs to the PEPCase type 2 family. Homotetramer. The cofactor is Mg(2+).

It carries out the reaction oxaloacetate + phosphate = phosphoenolpyruvate + hydrogencarbonate. Functionally, catalyzes the irreversible beta-carboxylation of phosphoenolpyruvate (PEP) to form oxaloacetate (OAA), a four-carbon dicarboxylic acid source for the tricarboxylic acid cycle. The protein is Phosphoenolpyruvate carboxylase of Pyrococcus abyssi (strain GE5 / Orsay).